The chain runs to 180 residues: Protein GrpE (180 aa).

Positions 1 to 21 (MSEEVKEQNLPEVEPVQEAAS) are disordered.

The protein belongs to the GrpE family. In terms of assembly, homodimer.

The protein resides in the cytoplasm. Participates actively in the response to hyperosmotic and heat shock by preventing the aggregation of stress-denatured proteins, in association with DnaK and GrpE. It is the nucleotide exchange factor for DnaK and may function as a thermosensor. Unfolded proteins bind initially to DnaJ; upon interaction with the DnaJ-bound protein, DnaK hydrolyzes its bound ATP, resulting in the formation of a stable complex. GrpE releases ADP from DnaK; ATP binding to DnaK triggers the release of the substrate protein, thus completing the reaction cycle. Several rounds of ATP-dependent interactions between DnaJ, DnaK and GrpE are required for fully efficient folding. In Campylobacter concisus (strain 13826), this protein is Protein GrpE.